The sequence spans 307 residues: MRVVFAGTPEPAVPSLRRLIESANHEVVAVVTRPDAVAGRGRKVTRSPIGLLADEHGIPVLTPVKASDPDFAAELARLEPDCAPVVAYGNLLPQNVLDIPKYGWVNLHFSLLPAWRGAAPVQAAISAGDEVTGASAFRLEAGMDTGPVYGVMTERIRDTDTAGDLLGRLAENGAALLESVLDGLEAGEINAVPQSADGVSYAPKVTVDAARVRWELPARTVDRHIRAVTPAPGAWTMIGDLRVKVGPVTVTDETLAVGEISVRKDGLYIGTATTAVRLGQIQPPGKKLMSAGDWARGARLDAEVRAQ.

Residue 110 to 113 (SLLP) coordinates (6S)-5,6,7,8-tetrahydrofolate.

The protein belongs to the Fmt family.

It catalyses the reaction L-methionyl-tRNA(fMet) + (6R)-10-formyltetrahydrofolate = N-formyl-L-methionyl-tRNA(fMet) + (6S)-5,6,7,8-tetrahydrofolate + H(+). Attaches a formyl group to the free amino group of methionyl-tRNA(fMet). The formyl group appears to play a dual role in the initiator identity of N-formylmethionyl-tRNA by promoting its recognition by IF2 and preventing the misappropriation of this tRNA by the elongation apparatus. In Rhodococcus erythropolis (strain PR4 / NBRC 100887), this protein is Methionyl-tRNA formyltransferase.